The chain runs to 252 residues: Small ribosomal subunit protein uS2 (252 aa).

Ser-2 carries the post-translational modification N-acetylserine. Low complexity predominate over residues 213–222 (QVAEETAGAA). Residues 213–252 (QVAEETAGAATEEEEAKEEVTEEQTEATEWAEETTEAVAW) are disordered. Residues 223–252 (TEEEEAKEEVTEEQTEATEWAEETTEAVAW) show a composition bias toward acidic residues.

It belongs to the universal ribosomal protein uS2 family. Component of the small ribosomal subunit. Mature ribosomes consist of a small (40S) and a large (60S) subunit. The 40S subunit contains about 33 different proteins and 1 molecule of RNA (18S). The 60S subunit contains about 49 different proteins and 3 molecules of RNA (25S, 5.8S and 5S). Interacts with RPS21.

It localises to the cytoplasm. Functionally, required for the assembly and/or stability of the 40S ribosomal subunit. Required for the processing of the 20S rRNA-precursor to mature 18S rRNA in a late step of the maturation of 40S ribosomal subunits. The protein is Small ribosomal subunit protein uS2 of Zygosaccharomyces rouxii (strain ATCC 2623 / CBS 732 / NBRC 1130 / NCYC 568 / NRRL Y-229).